The primary structure comprises 579 residues: Ribonucleoside-diphosphate reductase small chain (579 aa).

The Fe cation site is built by Asp130, Glu160, and His163. The active site involves Tyr167. Positions 225, 258, and 261 each coordinate Fe cation. A Fido domain is found at 435–579 (DMTWTLKDVH…VSVFVDQFYR (145 aa)).

It belongs to the ribonucleoside diphosphate reductase small chain family. In terms of assembly, heterotetramer composed of a homodimer of the large subunit (R1) and a homodimer of the small subunit (R2). Larger multisubunit protein complex are also active, composed of (R1)n(R2)n. Requires Fe cation as cofactor.

The enzyme catalyses a 2'-deoxyribonucleoside 5'-diphosphate + [thioredoxin]-disulfide + H2O = a ribonucleoside 5'-diphosphate + [thioredoxin]-dithiol. Functionally, ribonucleoside-diphosphate reductase holoenzyme provides the precursors necessary for viral DNA synthesis. Allows virus growth in non-dividing cells. Catalyzes the biosynthesis of deoxyribonucleotides from the corresponding ribonucleotides. The chain is Ribonucleoside-diphosphate reductase small chain from Magallana gigas (Pacific oyster).